Here is a 767-residue protein sequence, read N- to C-terminus: Protein hunchback (767 aa).

Disordered regions lie at residues 30-51 (EPGHHLDGNSVASSPRQSPIPS), 105-127 (QQQYQQHFQAAQQQHHHHHHLMG), and 174-212 (EKLQALTPPMDVTPPKSPAKSSQSNIEPEKEHDQMSNSS). Residues 39–51 (SVASSPRQSPIPS) are compositionally biased toward polar residues. The segment covering 105–117 (QQQYQQHFQAAQQ) has biased composition (low complexity). Over residues 200-212 (EPEKEHDQMSNSS) the composition is skewed to basic and acidic residues. C2H2-type zinc fingers lie at residues 242–264 (YKCKTCGVVAITKVDFWAHTRTH), 271–293 (LQCPKCPFVTEFKHHLEYHIRKH), 299–321 (FQCDKCSYTCVNKSMLNSHRKSH), and 327–351 (YRCADCDYATKYCHSFKLHLRKYGH). Disordered regions lie at residues 357 to 424 (LDED…TSQL), 518 to 570 (QLQQ…QPQQ), and 610 to 704 (GVMT…APPS). The span at 386-397 (IASGGSGSGSGS) shows a compositional bias: gly residues. A compositionally biased stretch (low complexity) spans 518 to 527 (QLQQQNQQQS). The span at 528 to 537 (DNEEEEQDDE) shows a compositional bias: acidic residues. Residues 661-704 (ANTSASSTASSSGNSSNASSNSNGNSSSNSSSSGTNSAAAAPPS) show a composition bias toward low complexity. C2H2-type zinc fingers lie at residues 714–736 (YECKYCDIFFKDAVLYTIHMGYH) and 742–766 (FKCNMCGEKCDGPVGLFVHMARNAH).

This sequence belongs to the hunchback C2H2-type zinc-finger protein family.

The protein localises to the nucleus. Functionally, gap class segmentation protein that controls development of head structures. The polypeptide is Protein hunchback (hb) (Drosophila orena (Fruit fly)).